We begin with the raw amino-acid sequence, 88 residues long: UPF0250 protein PM1928 (88 aa).

It belongs to the UPF0250 family.

The chain is UPF0250 protein PM1928 from Pasteurella multocida (strain Pm70).